The chain runs to 360 residues: Photosystem II protein D1 (360 aa).

The next 3 helical transmembrane spans lie at 30 to 47 (YVGW…TAAA), 119 to 134 (HFLI…QWEL), and 143 to 157 (WICV…AAFA). A chlorophyll a-binding site is contributed by His119. Pheophytin a is bound at residue Tyr127. Residues Asp171 and Glu190 each coordinate [CaMn4O5] cluster. The chain crosses the membrane as a helical span at residues 198–219 (FHMAGVAGMFGGSLFSAMHGSL). His199 lines the chlorophyll a pocket. Residues His216 and 265–266 (SF) contribute to the a quinone site. His216 provides a ligand contact to Fe cation. His273 serves as a coordination point for Fe cation. A helical transmembrane segment spans residues 275–289 (FLAVFPVVCVWLTSM). 4 residues coordinate [CaMn4O5] cluster: His333, Glu334, Asp343, and Ala345. Positions 346-360 (AAESTTVALSAPAIG) are excised as a propeptide.

Belongs to the reaction center PufL/M/PsbA/D family. As to quaternary structure, PSII is composed of 1 copy each of membrane proteins PsbA, PsbB, PsbC, PsbD, PsbE, PsbF, PsbH, PsbI, PsbJ, PsbK, PsbL, PsbM, PsbT, PsbX, PsbY, Psb30/Ycf12, peripheral proteins PsbO, CyanoQ (PsbQ), PsbU, PsbV and a large number of cofactors. It forms dimeric complexes. The D1/D2 heterodimer binds P680, chlorophylls that are the primary electron donor of PSII, and subsequent electron acceptors. It shares a non-heme iron and each subunit binds pheophytin, quinone, additional chlorophylls, carotenoids and lipids. D1 provides most of the ligands for the Mn4-Ca-O5 cluster of the oxygen-evolving complex (OEC). There is also a Cl(-1) ion associated with D1 and D2, which is required for oxygen evolution. The PSII complex binds additional chlorophylls, carotenoids and specific lipids. serves as cofactor. Tyr-162 forms a radical intermediate that is referred to as redox-active TyrZ, YZ or Y-Z. In terms of processing, C-terminally processed by CtpA; processing is essential to allow assembly of the oxygen-evolving complex and thus photosynthetic growth.

It is found in the cellular thylakoid membrane. It catalyses the reaction 2 a plastoquinone + 4 hnu + 2 H2O = 2 a plastoquinol + O2. Photosystem II (PSII) is a light-driven water:plastoquinone oxidoreductase that uses light energy to abstract electrons from H(2)O, generating O(2) and a proton gradient subsequently used for ATP formation. It consists of a core antenna complex that captures photons, and an electron transfer chain that converts photonic excitation into a charge separation. The D1/D2 (PsbA/PsbD) reaction center heterodimer binds P680, the primary electron donor of PSII as well as several subsequent electron acceptors. This is Photosystem II protein D1 from Prochlorococcus marinus (strain MIT 9301).